The sequence spans 352 residues: Blue-sensitive opsin (352 aa).

Over 1-42 (MRGNRLVEFPDDFWIPIPLDTNNVTALSPFLVPQDHLGSPTI) the chain is Extracellular. N-linked (GlcNAc...) asparagine glycosylation occurs at asparagine 23. Residues 43–67 (FYSMSALMFVLFVAGTAINLLTIAC) form a helical membrane-spanning segment. The Cytoplasmic portion of the chain corresponds to 68-79 (TLQYKKLRSHLN). A helical membrane pass occupies residues 80–105 (YILVNMAVANLIVASTGSSTCFVCFA). Over 106–119 (FKYMVLGPLGCKIE) the chain is Extracellular. Cysteine 116 and cysteine 193 are disulfide-bonded. The chain crosses the membrane as a helical span at residues 120-139 (GFTAALGGMVSLWSLAVIAF). At 140–158 (ERWLVICKPLGNFVFKSEH) the chain is on the cytoplasmic side. A helical membrane pass occupies residues 159–182 (ALLCCALTWVCGLCASVPPLVGWS). At 183–208 (RYIPEGMQCSCGPDWYTTGNKFNNES) the chain is on the extracellular side. Asparagine 206 carries an N-linked (GlcNAc...) asparagine glycan. The chain crosses the membrane as a helical span at residues 209–236 (FVMFLFCFCFAVPFSIIVFCYSQLLFTL). The Cytoplasmic portion of the chain corresponds to 237–258 (KMAAKAQADSASTQKAEKEVTR). The chain crosses the membrane as a helical span at residues 259 to 282 (MVVVMVVAFLVCYVPYASFALWVI). Over 283–290 (NNRGQTFD) the chain is Extracellular. A helical transmembrane segment spans residues 291–315 (LRLATIPSCVSKASTVYNPVIYVLL). N6-(retinylidene)lysine is present on lysine 302. At 316–352 (NKQFRLCMKKMLGMSADEDEESSTSQSTTEVSKVGPS) the chain is on the cytoplasmic side. The interval 332-352 (DEDEESSTSQSTTEVSKVGPS) is disordered.

Belongs to the G-protein coupled receptor 1 family. Opsin subfamily. Post-translationally, phosphorylated on some or all of the serine and threonine residues present in the C-terminal region. As to expression, the color pigments are found in the cone photoreceptor cells.

It localises to the membrane. Its function is as follows. Visual pigments are the light-absorbing molecules that mediate vision. They consist of an apoprotein, opsin, covalently linked to cis-retinal. This chain is Blue-sensitive opsin, found in Oryzias latipes (Japanese rice fish).